A 24-amino-acid polypeptide reads, in one-letter code: Brevinin-1La (24 aa).

Cysteine 18 and cysteine 24 are oxidised to a cystine.

In terms of tissue distribution, expressed by the skin glands.

The protein localises to the secreted. Antibacterial activity against Gram-positive bacterium S.aureus and Gram-negative bacterium E.coli. The sequence is that of Brevinin-1La from Rana luteiventris (Columbia spotted frog).